A 622-amino-acid chain; its full sequence is MAAHHRQNTAGRRKVQVSYVIRDEVEKYNRNGVNALQLDPALNRLFTAGRDSIIRIWSVNQHKQDPYIASMEHHTDWVNDIVLCCNGKTLISASSDTTVKVWNAHKGFCMSTLRTHKDYVKALAYAKDKELVASAGLDRQIFLWDVNTLTALTASNNTVTTSSLSGNKDSIYSLAMNQLGTIIVSGSTEKVLRVWDPRTCAKLMKLKGHTDNVKALLLNRDGTQCLSGSSDGTIRLWSLGQQRCIATYRVHDEGVWALQVNDAFTHVYSGGRDRKIYCTDLRNPDIRVLICEEKAPVLKMELDRSADPPPAIWVATTKSTVNKWTLKGIHNFRASGDYDNDCTNPITPLCTQPDQVIKGGASIIQCHILNDKRHILTKDTNNNVAYWVSVKDAGFSSPDGSDPKLNLGGLLLQALLEYWPRTHVNPMDEEENEVNHVNGEQENRVQKGNGYFQVPPHTPVIFGEAGGRTLFRLLCRDSGGETESMLLNETVPQWVIDITVDKNMPKFNKIPFYLQPHASSGAKTLKKDRLSASDMLQVRKVMEHVYEKIINLDNESQTTSSSNNEKPGEQEKEEDIAVLAEEKIELLCQDQVLDPNMDLRTVKHFIWKSGGDLTLHYRQKST.

Position 28 is a phosphotyrosine (tyrosine 28). WD repeat units lie at residues 28–67 (YNRN…QDPY), 73–112 (HHTD…CMST), 115–154 (THKD…ALTA), 166–205 (GNKD…KLMK), 208–247 (GHTD…CIAT), 250–289 (VHDE…IRVL), 292–334 (EEKA…NFRA), and 358–397 (KGGA…GFSS). Residue lysine 214 is modified to N6-acetyllysine. Lysine 523 carries the N6-acetyllysine modification. The interval 552–573 (LDNESQTTSSSNNEKPGEQEKE) is disordered. Residues 554-565 (NESQTTSSSNNE) show a composition bias toward low complexity. Threonine 558 carries the phosphothreonine modification.

It belongs to the WD repeat WDR48 family. In terms of assembly, interacts with USP46. Interacts with USP1. Interacts with USP12. Component of the USP12-WDR20-WDR48 deubiquitinating complex. Component of the USP12-DMWD-WDR48 deubiquitinating complex. Interacts with PHLPP1. Interacts with RAD51AP1; the interaction is direct and promotes formation of a trimeric complex with RAD51 via RAD51AP1. Interacts with ATAD5; the interaction regulates USP1-mediated PCNA deubiquitination. Interacts with RAD51; the interaction is enhanced under replication stress. Interacts with ITCH; the interaction is more efficient when both USP12 and WDR48/UAF1 are involved and may facilitate recruitment of the USP12 deubiquitinating complex to Notch.

Its subcellular location is the nucleus. It is found in the cytoplasm. It localises to the lysosome. The protein localises to the late endosome. Its function is as follows. Regulator of deubiquitinating complexes, which acts as a strong activator of USP1, USP12 and USP46. Enhances the USP1-mediated deubiquitination of FANCD2; USP1 being almost inactive by itself. Activates deubiquitination by increasing the catalytic turnover without increasing the affinity of deubiquitinating enzymes for the substrate. Also activates deubiquitinating activity of complexes containing USP12. Docks at the distal end of the USP12 fingers domain and induces a cascade of structural changes leading to the activation of the enzyme. Together with RAD51AP1, promotes DNA repair by stimulating RAD51-mediated homologous recombination. Binds single-stranded DNA (ssDNA) and double-stranded DNA (dsDNA). DNA-binding is required both for USP1-mediated deubiquitination of FANCD2 and stimulation of RAD51-mediated homologous recombination: both WDR48/UAF1 and RAD51AP1 have coordinated role in DNA-binding during these processes. Together with ATAD5 and by regulating USP1 activity, has a role in PCNA-mediated translesion synthesis (TLS) by deubiquitinating monoubiquitinated PCNA. Together with ATAD5, has a role in recruiting RAD51 to stalled forks during replication stress. In Macaca fascicularis (Crab-eating macaque), this protein is WD repeat-containing protein 48 (WDR48).